Consider the following 137-residue polypeptide: MANQPSAEELKKKLSEMQFYVTQDRGTEPPFTGRLLHNKRDGVYHCLVCDMPLFHSHTKYDSGCGWPSFYQPVSEEAIRYIDDFSHGMQRVEIRCGNCDAHLGHVFPDGPQPTGERYCVNSASLAFSDEKNGDQLKG.

Positions 7–129 (AEELKKKLSE…NSASLAFSDE (123 aa)) constitute a MsrB domain. Cys46, Cys49, Cys95, and Cys98 together coordinate Zn(2+). Catalysis depends on Cys118, which acts as the Nucleophile.

Belongs to the MsrB Met sulfoxide reductase family. Zn(2+) is required as a cofactor.

It catalyses the reaction L-methionyl-[protein] + [thioredoxin]-disulfide + H2O = L-methionyl-(R)-S-oxide-[protein] + [thioredoxin]-dithiol. In Salmonella agona (strain SL483), this protein is Peptide methionine sulfoxide reductase MsrB.